Here is a 206-residue protein sequence, read N- to C-terminus: LexA repressor (206 aa).

A DNA-binding region (H-T-H motif) is located at residues 28 to 48; sequence RAEIARELGFRSANAAEEHLK. Residues S123 and K160 each act as for autocatalytic cleavage activity in the active site.

This sequence belongs to the peptidase S24 family. In terms of assembly, homodimer.

It carries out the reaction Hydrolysis of Ala-|-Gly bond in repressor LexA.. Represses a number of genes involved in the response to DNA damage (SOS response), including recA and lexA. In the presence of single-stranded DNA, RecA interacts with LexA causing an autocatalytic cleavage which disrupts the DNA-binding part of LexA, leading to derepression of the SOS regulon and eventually DNA repair. This Vibrio atlanticus (strain LGP32) (Vibrio splendidus (strain Mel32)) protein is LexA repressor.